A 1789-amino-acid polypeptide reads, in one-letter code: Mediator of RNA polymerase II transcription subunit 12 (1789 aa).

Disordered regions lie at residues 1 to 138 (MTSR…QRRG), 156 to 288 (SSPT…GSSA), 1592 to 1656 (IGTA…GWHA), and 1707 to 1727 (THLN…NPTR). Composition is skewed to low complexity over residues 25–66 (SQQR…QQQQ) and 81–98 (TRNN…TLNN). Polar residues predominate over residues 107–124 (QDPTSIVSPADPSGSSPA). Basic and acidic residues predominate over residues 220-229 (AVPDHSRREQ). Low complexity-rich tracts occupy residues 271-288 (RSSA…GSSA), 1592-1628 (IGTA…SAVS), 1647-1656 (QQAQAQGWHA), and 1707-1716 (THLNLGNNSN).

Belongs to the Mediator complex subunit 12 family. In terms of assembly, component of the srb8-11 complex, which itself associates with the Mediator complex.

It is found in the nucleus. Its function is as follows. Component of the srb8-11 complex. The srb8-11 complex is a regulatory module of the Mediator complex which is itself involved in regulation of basal and activated RNA polymerase II-dependent transcription. The srb8-11 complex may be involved in the transcriptional repression of a subset of genes regulated by Mediator. It may inhibit the association of the Mediator complex with RNA polymerase II to form the holoenzyme complex. The chain is Mediator of RNA polymerase II transcription subunit 12 (srb8) from Neurospora crassa (strain ATCC 24698 / 74-OR23-1A / CBS 708.71 / DSM 1257 / FGSC 987).